Consider the following 959-residue polypeptide: Translation initiation factor IF-2 (959 aa).

Residues 1–10 (MSDKTNDDKT) are compositionally biased toward basic and acidic residues. The disordered stretch occupies residues 1–374 (MSDKTNDDKT…SQMQETREKI (374 aa)). The segment covering 27-37 (EQSTVRQNFSH) has biased composition (polar residues). 2 stretches are compositionally biased toward low complexity: residues 63 to 118 (AAAA…VTKP) and 128 to 138 (QRPGGQQAQRP). Basic and acidic residues-rich tracts occupy residues 154-225 (SEMD…EAAK) and 232-241 (ARSERRDDAR). Residues 246–284 (GARPQQAGRPQGGRPQPAGRPQQGSPRPAPIIADAAPIA) are compositionally biased toward low complexity. Positions 318 to 333 (PEVRAPKVVKGEDDRR) are enriched in basic and acidic residues. The 170-residue stretch at 457-626 (SRPPVVTIMG…LLQAEMLDLK (170 aa)) folds into the tr-type G domain. The tract at residues 466–473 (GHVDHGKT) is G1. GTP is bound at residue 466–473 (GHVDHGKT). A G2 region spans residues 491–495 (GITQH). The interval 512–515 (DTPG) is G3. Residues 512 to 516 (DTPGH) and 566 to 569 (NKID) contribute to the GTP site. A G4 region spans residues 566 to 569 (NKID). The G5 stretch occupies residues 602-604 (SAK).

Belongs to the TRAFAC class translation factor GTPase superfamily. Classic translation factor GTPase family. IF-2 subfamily.

It is found in the cytoplasm. One of the essential components for the initiation of protein synthesis. Protects formylmethionyl-tRNA from spontaneous hydrolysis and promotes its binding to the 30S ribosomal subunits. Also involved in the hydrolysis of GTP during the formation of the 70S ribosomal complex. The chain is Translation initiation factor IF-2 from Brucella abortus (strain 2308).